A 704-amino-acid polypeptide reads, in one-letter code: Glycine--tRNA ligase beta subunit (704 aa).

The protein belongs to the class-II aminoacyl-tRNA synthetase family. In terms of assembly, tetramer of two alpha and two beta subunits.

Its subcellular location is the cytoplasm. It carries out the reaction tRNA(Gly) + glycine + ATP = glycyl-tRNA(Gly) + AMP + diphosphate. In Rhizobium johnstonii (strain DSM 114642 / LMG 32736 / 3841) (Rhizobium leguminosarum bv. viciae), this protein is Glycine--tRNA ligase beta subunit.